Here is a 362-residue protein sequence, read N- to C-terminus: Phosphoserine aminotransferase (362 aa).

The L-glutamate site is built by S9 and R42. Pyridoxal 5'-phosphate is bound by residues 76 to 77 (GR), W102, T153, D174, and Q197. K198 carries the N6-(pyridoxal phosphate)lysine modification. 239–240 (NT) contributes to the pyridoxal 5'-phosphate binding site.

This sequence belongs to the class-V pyridoxal-phosphate-dependent aminotransferase family. SerC subfamily. As to quaternary structure, homodimer. Requires pyridoxal 5'-phosphate as cofactor.

The protein localises to the cytoplasm. The catalysed reaction is O-phospho-L-serine + 2-oxoglutarate = 3-phosphooxypyruvate + L-glutamate. It carries out the reaction 4-(phosphooxy)-L-threonine + 2-oxoglutarate = (R)-3-hydroxy-2-oxo-4-phosphooxybutanoate + L-glutamate. It functions in the pathway amino-acid biosynthesis; L-serine biosynthesis; L-serine from 3-phospho-D-glycerate: step 2/3. The protein operates within cofactor biosynthesis; pyridoxine 5'-phosphate biosynthesis; pyridoxine 5'-phosphate from D-erythrose 4-phosphate: step 3/5. In terms of biological role, catalyzes the reversible conversion of 3-phosphohydroxypyruvate to phosphoserine and of 3-hydroxy-2-oxo-4-phosphonooxybutanoate to phosphohydroxythreonine. The protein is Phosphoserine aminotransferase of Klebsiella pneumoniae (strain 342).